The chain runs to 354 residues: Ornithine transcarbamylase, mitochondrial (354 aa).

The transit peptide at 1 to 32 directs the protein to the mitochondrion; it reads MLFHLRTLLNNAALRNGHNFVVRNFRCGQPLQ. Lys70 bears the N6-acetyllysine; alternate mark. N6-succinyllysine; alternate is present on Lys70. Lys80 is modified (N6-succinyllysine). Lys88 carries the N6-acetyllysine; alternate modification. The residue at position 88 (Lys88) is an N6-succinyllysine; alternate. A Phosphoserine modification is found at Ser133. N6-acetyllysine; alternate is present on residues Lys144, Lys221, Lys231, and Lys238. 4 positions are modified to N6-succinyllysine; alternate: Lys144, Lys221, Lys231, and Lys238. N6-acetyllysine is present on Lys243. Asp263 is an active-site residue. Lys274 and Lys289 each carry N6-succinyllysine. An N6-acetyllysine; alternate modification is found at Lys292. Lys292 is modified (N6-succinyllysine; alternate). Residue Cys303 is part of the active site. Lys307 bears the N6-acetyllysine; alternate mark. Lys307 bears the N6-succinyllysine; alternate mark.

It belongs to the aspartate/ornithine carbamoyltransferase superfamily. OTCase family. Homotrimer. In terms of processing, acetylation at Lys-88 negatively regulates ornithine carbamoyltransferase activity in response to nutrient signals.

The protein resides in the mitochondrion matrix. It catalyses the reaction carbamoyl phosphate + L-ornithine = L-citrulline + phosphate + H(+). The protein operates within nitrogen metabolism; urea cycle; L-citrulline from L-ornithine and carbamoyl phosphate: step 1/1. With respect to regulation, negatively regulated by lysine acetylation. Functionally, catalyzes the second step of the urea cycle, the condensation of carbamoyl phosphate with L-ornithine to form L-citrulline. The urea cycle ensures the detoxification of ammonia by converting it to urea for excretion. This is Ornithine transcarbamylase, mitochondrial from Bos taurus (Bovine).